Reading from the N-terminus, the 229-residue chain is Echinolectin 1 (229 aa).

N-linked (GlcNAc...) asparagine glycosylation is present at N94.

It is found in the secreted. The sequence is that of Echinolectin 1 from Echinometra lucunter (Rock-boring urchin).